The primary structure comprises 469 residues: 3-isopropylmalate dehydratase large subunit (469 aa).

3 residues coordinate [4Fe-4S] cluster: Cys350, Cys410, and Cys413.

Belongs to the aconitase/IPM isomerase family. LeuC type 1 subfamily. In terms of assembly, heterodimer of LeuC and LeuD. [4Fe-4S] cluster is required as a cofactor.

The enzyme catalyses (2R,3S)-3-isopropylmalate = (2S)-2-isopropylmalate. The protein operates within amino-acid biosynthesis; L-leucine biosynthesis; L-leucine from 3-methyl-2-oxobutanoate: step 2/4. Catalyzes the isomerization between 2-isopropylmalate and 3-isopropylmalate, via the formation of 2-isopropylmaleate. The sequence is that of 3-isopropylmalate dehydratase large subunit from Mesorhizobium japonicum (strain LMG 29417 / CECT 9101 / MAFF 303099) (Mesorhizobium loti (strain MAFF 303099)).